A 183-amino-acid polypeptide reads, in one-letter code: Ribosome maturation factor RimM (183 aa).

In terms of domain architecture, PRC barrel spans 104-183; the sequence is EGDYYWKDLI…TIEVDWDPGF (80 aa).

This sequence belongs to the RimM family. As to quaternary structure, binds ribosomal protein uS19.

It localises to the cytoplasm. An accessory protein needed during the final step in the assembly of 30S ribosomal subunit, possibly for assembly of the head region. Essential for efficient processing of 16S rRNA. May be needed both before and after RbfA during the maturation of 16S rRNA. It has affinity for free ribosomal 30S subunits but not for 70S ribosomes. This Cronobacter sakazakii (strain ATCC BAA-894) (Enterobacter sakazakii) protein is Ribosome maturation factor RimM.